The chain runs to 273 residues: Mitochondrial distribution and morphology protein 12 (273 aa).

Residues 1-260 enclose the SMP-LTD domain; the sequence is MSFDINWEQL…WPSWINFDFY (260 aa). The tract at residues 76–98 is disordered; it reads MSAEEETEGSDDEGYGGDRVRNR. Residues 78–90 are compositionally biased toward acidic residues; it reads AEEETEGSDDEGY.

The protein belongs to the MDM12 family. In terms of assembly, component of the ER-mitochondria encounter structure (ERMES) or MDM complex, composed of MMM1, MDM10, MDM12 and MDM34. An MMM1 homodimer associates with one molecule of MDM12 on each side in a pairwise head-to-tail manner, and the SMP-LTD domains of MMM1 and MDM12 generate a continuous hydrophobic tunnel for phospholipid trafficking.

The protein localises to the mitochondrion outer membrane. The protein resides in the endoplasmic reticulum membrane. Its function is as follows. Component of the ERMES/MDM complex, which serves as a molecular tether to connect the endoplasmic reticulum (ER) and mitochondria. Components of this complex are involved in the control of mitochondrial shape and protein biogenesis, and function in nonvesicular lipid trafficking between the ER and mitochondria. MDM12 is required for the interaction of the ER-resident membrane protein MMM1 and the outer mitochondrial membrane-resident beta-barrel protein MDM10. The MDM12-MMM1 subcomplex functions in the major beta-barrel assembly pathway that is responsible for biogenesis of all mitochondrial outer membrane beta-barrel proteins, and acts in a late step after the SAM complex. The MDM10-MDM12-MMM1 subcomplex further acts in the TOM40-specific pathway after the action of the MDM12-MMM1 complex. Essential for establishing and maintaining the structure of mitochondria and maintenance of mtDNA nucleoids. This chain is Mitochondrial distribution and morphology protein 12, found in Vanderwaltozyma polyspora (strain ATCC 22028 / DSM 70294 / BCRC 21397 / CBS 2163 / NBRC 10782 / NRRL Y-8283 / UCD 57-17) (Kluyveromyces polysporus).